The following is a 275-amino-acid chain: Sulfate transporter CysZ (275 aa).

The disordered stretch occupies residues 1–24 (MSSEKSSFPEKPPSFEKPSHSNTA). Residues 13 to 24 (PSFEKPSHSNTA) are compositionally biased toward basic and acidic residues. The next 4 helical transmembrane spans lie at 49–69 (FVIL…WWLF), 93–113 (LIWP…FSTI), 169–189 (IVLL…PVLW), and 232–252 (ALVS…PVAV).

The protein belongs to the CysZ family.

Its subcellular location is the cell inner membrane. Functionally, high affinity, high specificity proton-dependent sulfate transporter, which mediates sulfate uptake. Provides the sulfur source for the cysteine synthesis pathway. The protein is Sulfate transporter CysZ of Pectobacterium atrosepticum (strain SCRI 1043 / ATCC BAA-672) (Erwinia carotovora subsp. atroseptica).